The primary structure comprises 178 residues: Large ribosomal subunit protein uL6 (178 aa).

The protein belongs to the universal ribosomal protein uL6 family. In terms of assembly, part of the 50S ribosomal subunit.

In terms of biological role, this protein binds to the 23S rRNA, and is important in its secondary structure. It is located near the subunit interface in the base of the L7/L12 stalk, and near the tRNA binding site of the peptidyltransferase center. This chain is Large ribosomal subunit protein uL6, found in Streptococcus pneumoniae serotype 19F (strain G54).